The primary structure comprises 287 residues: 2-dehydro-3-deoxyphosphooctonate aldolase (287 aa).

It belongs to the KdsA family.

It is found in the cytoplasm. It catalyses the reaction D-arabinose 5-phosphate + phosphoenolpyruvate + H2O = 3-deoxy-alpha-D-manno-2-octulosonate-8-phosphate + phosphate. It participates in carbohydrate biosynthesis; 3-deoxy-D-manno-octulosonate biosynthesis; 3-deoxy-D-manno-octulosonate from D-ribulose 5-phosphate: step 2/3. The protein operates within bacterial outer membrane biogenesis; lipopolysaccharide biosynthesis. The chain is 2-dehydro-3-deoxyphosphooctonate aldolase from Bradyrhizobium sp. (strain ORS 278).